A 213-amino-acid chain; its full sequence is Uridine kinase (213 aa).

Position 13–20 (glycine 13–serine 20) interacts with ATP.

Belongs to the uridine kinase family.

The protein resides in the cytoplasm. The catalysed reaction is uridine + ATP = UMP + ADP + H(+). The enzyme catalyses cytidine + ATP = CMP + ADP + H(+). Its pathway is pyrimidine metabolism; CTP biosynthesis via salvage pathway; CTP from cytidine: step 1/3. It functions in the pathway pyrimidine metabolism; UMP biosynthesis via salvage pathway; UMP from uridine: step 1/1. The protein is Uridine kinase of Haemophilus influenzae (strain PittGG).